Reading from the N-terminus, the 840-residue chain is UPF0508 protein SCY_2952 (840 aa).

Belongs to the UPF0508 family.

This chain is UPF0508 protein SCY_2952, found in Saccharomyces cerevisiae (strain YJM789) (Baker's yeast).